Reading from the N-terminus, the 36-residue chain is Adenylate kinase (36 aa).

10-15 (GAGKGT) serves as a coordination point for ATP. Residues 30-36 (ATGDLFR) are NMP. AMP is bound by residues T31 and R36.

It belongs to the adenylate kinase family. Monomer.

It is found in the cytoplasm. It catalyses the reaction AMP + ATP = 2 ADP. Its pathway is purine metabolism; AMP biosynthesis via salvage pathway; AMP from ADP: step 1/1. Its function is as follows. Catalyzes the reversible transfer of the terminal phosphate group between ATP and AMP. Plays an important role in cellular energy homeostasis and in adenine nucleotide metabolism. This is Adenylate kinase (adk) from Streptomyces griseus.